A 317-amino-acid chain; its full sequence is Olfactory receptor 1B1 (317 aa).

At 1–29 the chain is on the extracellular side; it reads MSFAPNASHSPVFLLLGFSRANISYTLLF. Asn-6 and Asn-22 each carry an N-linked (GlcNAc...) asparagine glycan. Residues 30-50 traverse the membrane as a helical segment; the sequence is FLFLAIYLTTILGNVTLVLLI. Residues 51 to 66 are Cytoplasmic-facing; it reads SWDSRLHSPMYYLLRG. The chain crosses the membrane as a helical span at residues 67 to 87; that stretch reads LSVIDMGLSTVTLPQLLAHLV. The Extracellular segment spans residues 88–98; it reads SHYPTIPAARC. A disulfide bridge links Cys-98 with Cys-184. The chain crosses the membrane as a helical span at residues 99–119; it reads LAQFFFFYAFGVTDTLVIAVM. Over 120–144 the chain is Cytoplasmic; the sequence is ALDRYVAICDPLHYALVMNHQRCAC. A helical membrane pass occupies residues 145-165; that stretch reads LLALSWVVSILHTMLRVGLVL. Residues 166–201 are Extracellular-facing; sequence PLCWTGDAGGNVNLPHFFCDHRPLLRASCSDIHSNE. A helical transmembrane segment spans residues 202-222; sequence LAIFFEGGFLMLGPCALIVLS. The Cytoplasmic segment spans residues 223-248; the sequence is YVRIGAAILRLPSAAGRRRAVSTCGS. A helical membrane pass occupies residues 249-269; it reads HLTMVGFLYGTIICVYFQPPF. The Extracellular portion of the chain corresponds to 270–276; it reads QNSQYQD. A helical membrane pass occupies residues 277–297; that stretch reads MVASVMYTAITPLANPFVYSL. The Cytoplasmic portion of the chain corresponds to 298-317; that stretch reads HNKDVKGALCRLLEWVKVDP.

Belongs to the G-protein coupled receptor 1 family.

It localises to the cell membrane. Functionally, odorant receptor. The sequence is that of Olfactory receptor 1B1 (OR1B1) from Homo sapiens (Human).